Here is a 227-residue protein sequence, read N- to C-terminus: Endolytic peptidoglycan transglycosylase RlpA (227 aa).

Residues 1-21 (MMNHKFVLLILLIFYCFFLSG) form the signal peptide. Residue Cys-22 is the site of N-palmitoyl cysteine attachment. A lipid anchor (S-diacylglycerol cysteine) is attached at Cys-22.

This sequence belongs to the RlpA family.

Its subcellular location is the cell membrane. Functionally, lytic transglycosylase with a strong preference for naked glycan strands that lack stem peptides. The sequence is that of Endolytic peptidoglycan transglycosylase RlpA from Rickettsia bellii (strain RML369-C).